A 544-amino-acid chain; its full sequence is Pectinesterase 3 (544 aa).

N-linked (GlcNAc...) asparagine glycans are attached at residues N174, N257, and N291. Residues T306 and Q336 each contribute to the substrate site. D359 acts as the Proton donor in catalysis. The active-site Nucleophile is the D380. R448 and W450 together coordinate substrate. Residue N532 is glycosylated (N-linked (GlcNAc...) asparagine).

It in the N-terminal section; belongs to the PMEI family. In the C-terminal section; belongs to the pectinesterase family.

It is found in the secreted. It localises to the cell wall. It carries out the reaction [(1-&gt;4)-alpha-D-galacturonosyl methyl ester](n) + n H2O = [(1-&gt;4)-alpha-D-galacturonosyl](n) + n methanol + n H(+). Its pathway is glycan metabolism; pectin degradation; 2-dehydro-3-deoxy-D-gluconate from pectin: step 1/5. In terms of biological role, acts in the modification of cell walls via demethylesterification of cell wall pectin. The protein is Pectinesterase 3 (PME3) of Solanum lycopersicum (Tomato).